A 167-amino-acid polypeptide reads, in one-letter code: Transcription initiation factor TFIID subunit 10 (167 aa).

Disordered stretches follow at residues 1–56 and 119–139; these read MASD…EESE and TTNI…NPKD. Positions 41-56 are enriched in acidic residues; it reads EQPDVEEVPLTTEESE. The span at 130-139 shows a compositional bias: basic and acidic residues; the sequence is SSKDKKNPKD.

The protein belongs to the TAF10 family. In terms of assembly, belongs to the TFIID complex which is composed of TATA binding protein (Tbp) and a number of TBP-associated factors (TAFs). Also a member of the histone acetylase (HAT) complex. At embryonic stage 9, highest expression is detected within the ectoderm, ventral chord, and anterior foregut primordium. Later in development preferential expression is in the foregut, proventriculus, and central nervous system. Coexpressed with Taf10b in the lateral epidermis and anal plate.

It is found in the cytoplasm. It localises to the nucleus. Functionally, TFIID is a multimeric protein complex that plays a central role in mediating promoter responses to various activators and repressors. This is Transcription initiation factor TFIID subunit 10 from Drosophila melanogaster (Fruit fly).